The primary structure comprises 673 residues: Zinc finger protein 16 (673 aa).

Over residues 1–10 (MPSLRTRREE) the composition is skewed to basic and acidic residues. The interval 1 to 42 (MPSLRTRREEAEMELSAPGPSPWTPAPQARVSDAPAVTHPGS) is disordered. The interval 62-210 (YQQPDCDTRT…GVPTAESPLI (149 aa)) is necessary for transcription activation. The C2H2-type 1; degenerate zinc-finger motif lies at 209–231 (LICNECGKTFRGNPDLIQRQIVH). The segment at 237–259 (FMCDDCGKTFSQNSVLKNRHXSH) adopts a C2H2-type 2; degenerate zinc-finger fold. A Glycyl lysine isopeptide (Lys-Gly) (interchain with G-Cter in SUMO2) cross-link involves residue Lys253. 7 C2H2-type zinc fingers span residues 284-306 (YTCTECGKAFSQNSSLKKHQKSH), 312-334 (YECNECGKAFRRSSNLIQHQRIH), 340-362 (YVCSECGKAFRRSSNLIKHHRTH), 368-390 (FECGECGKAFSQSAHLRKHQRVH), 396-418 (YECNDCGKPFSRVSNLIKHHRVH), 424-446 (YKCSDCGKAFSQSSSLIQHRRIH), and 452-474 (HVCNVCGKAFSYSSVLRKHQIIH). The tract at residues 332 to 364 (RIHSGEKPYVCSECGKAFRRSSNLIKHHRTHTG) is required for nuclear localization. The interval 464–494 (SSVLRKHQIIHTGEKPYRCSVCGKAFSHSSA) is required for nuclear localization. Lys478 bears the N6-acetyllysine mark. 7 consecutive C2H2-type zinc fingers follow at residues 480–502 (YRCSVCGKAFSHSSALIQHQGVH), 508–530 (YACHECGKTFGRSSNLILHQRVH), 536–558 (YECTECGKTFSQSSTLIQHQRIH), 564–586 (HECNQCGKAFNRSSNLIHHQKVH), 592–614 (YTCVECGKGFSQSSHLIQHQIIH), 620–642 (YKCSECGKAFSQRSVLIQHQRIH), and 648–670 (YDCAACGKAFSQRSKLIKHQLIH).

It belongs to the krueppel C2H2-type zinc-finger protein family. In terms of assembly, interacts with INCA1; the interaction inhibits INCA1 activity and induces the cell cycle process.

The protein resides in the nucleus. Acts as a transcriptional activator. Promotes cell proliferation by facilitating the cell cycle phase transition from the S to G2/M phase. Involved in both the hemin- and phorbol myristate acetate (PMA)-induced erythroid and megakaryocytic differentiation, respectively. Also plays a role as an inhibitor of cell apoptosis. The polypeptide is Zinc finger protein 16 (ZNF16) (Pan paniscus (Pygmy chimpanzee)).